A 680-amino-acid chain; its full sequence is Pilus tip adhesin Cpa (680 aa).

Residues 62–211 (CFNLTKHFPS…IFQSSDKTFQ (150 aa)) constitute a cross-link (isoglutamyl cysteine thioester (Cys-Gln)). Positions 217–236 (EYVPDTPPKPGEEPPAKTEK) are disordered. The segment covering 226–236 (PGEEPPAKTEK) has biased composition (basic and acidic residues). The segment at residues 243 to 546 (KYAEGDYSKL…ELIDVISMED (304 aa)) is a cross-link (isoaspartyl lysine isopeptide (Lys-Asp)). In terms of domain architecture, CNA-B spans 253–311 (LEGATLKLAQIEGSGFQEKIFDSNKSGEKVELPNGTYVLSELKPPQGYGVATPITFKVA). Residues 374–526 (CFNADLHSPP…FFVPNSSRYQ (153 aa)) constitute a cross-link (isoglutamyl cysteine thioester (Cys-Gln)). Positions 562-667 (KTVTGTIADK…KEDETVAFEN (106 aa)) form a cross-link, isoaspartyl lysine isopeptide (Lys-Asn). The short motif at 672–676 (VPPTG) is the VPPTG sorting signal element. A Threonyl lysine isopeptide (Thr-Lys) (interchain with K-? in major pilin subunit) cross-link involves residue Thr675. Residues 676 to 680 (GLTTD) constitute a propeptide, removed by sortase.

In terms of assembly, monomer. Post-translationally, proteolytically processed and assembled in pili through a transpeptidation reaction catalyzed by a sortase, which leads to a covalent link between Cpa and a major pilin subunit.

It localises to the fimbrium. Functionally, component of the pilus tip. Can bind covalently, via its two reactive thioester bonds, to molecular targets from host cell surface and can thus mediate adhesion of the streptococcal pili to host cells. Lysine side chains or a carbohydrate with a free amine group might be candidates for Cpa binding. In vitro, can covalently bind to spermidine, but it is unlikely that spermidine is the natural target of Cpa. In Streptococcus pyogenes, this protein is Pilus tip adhesin Cpa (cpa).